The primary structure comprises 175 residues: uncharacterized protein (175 aa).

This is an uncharacterized protein from Connochaetes taurinus (Blue wildebeest).